The primary structure comprises 1060 residues: MLIEDVDALKSWLAKLLEPICDADPSALANYVVALVKKDKPEKELKAFCADQLDVFLQKETSGFVDKLFESLYTKNYLPLLEPVKPEPKPLVQEKEEIKEEVFQEPAEEERDGRKKKYPSPQKTRSESSERRTREKKREDGKWRDYDRYYERNELYREKYDWRRGRSKSRSKSRGLSRSRSRSRGRSKDRDPNRNVEHRERSKFKSERNDLESSYVPVSAPPPNSSEQYSSGAQSIPSTVTVIAPAHHSENTTESWSNYYNNHSSSNSFGRNLPPKRRCRDYDERGFCVLGDLCQFDHGNDPLVVDEVALPSMIPFPPPPPGLPPPPPPGMLMPPMPGPGPGPGPGPGPGPGPGPGPGHSMRLPVPQGHGQPPPSVVLPIPRPPITQSSLINSRDQPGTSAVPNLASVGTRLPPPLPQNLLYTVSERQPMYSREHGAAASERLQLGTPPPLLAARLVPPRNLMGSSIGYHTSVSSPTPLVPDTYEPDGYNPEAPSITSSGRSQYRQFFSRTQTQRPNLIGLTSGDMDVNPRAANIVIQTEPPVPVSINSNITRVVLEPDSRKRAMSGLEGPLTKKPWLGKQGNNNQNKPGFLRKNQYTNTKLEVKKIPQELNNITKLNEHFSKFGTIVNIQVAFKGDPEAALIQYLTNEEARKAISSTEAVLNNRFIRVLWHRENNEQPTLQSSAQLLLQQQQTLSHLSQQHHHLPQHLHQQQVLVAQSAPSTVHGGIQKMMSKPQTSGAYVLNKVPVKHRLGHAGGNQSDASHLLNQSGGAGEDCQIFSTPGHPKMIYSSSNLKTPSKLCSGSKSHDVQEVLKKKQEAMKLQQDMRKKRQEVLEKQIECQKMLISKLEKNKNMKPEERANIMKTLKELGEKISQLKDELKTSSAVSTPSKVKTKTEAQKELLDTELDLHKRLSSGEDTTELRKKLSQLQVEAARLGILPVGRGKTMSSQGRGRGRGRGGRGRGSLNHMVVDHRPKALTVGGFIEEEKEDLLQHFSTANQGPKFKDRRLQISWHKPKVPSISTETEEEEVKEEETETSDLFLPDDDDEDEDEYESRSWRR.

2 stretches are compositionally biased toward basic and acidic residues: residues 91-102 (LVQEKEEIKEEV) and 124-143 (TRSE…DGKW). Disordered stretches follow at residues 91-143 (LVQE…DGKW) and 162-235 (WRRG…GAQS). A compositionally biased stretch (basic residues) spans 165–185 (GRSKSRSKSRGLSRSRSRSRG). Positions 186 to 211 (RSKDRDPNRNVEHRERSKFKSERNDL) are enriched in basic and acidic residues. Polar residues predominate over residues 225 to 235 (SSEQYSSGAQS). Residues 273–301 (LPPKRRCRDYDERGFCVLGDLCQFDHGND) form a C3H1-type zinc finger. 2 stretches are compositionally biased toward pro residues: residues 319–356 (PPPG…PGPG) and 371–384 (QPPP…PRPP). The disordered stretch occupies residues 319–412 (PPPGLPPPPP…PNLASVGTRL (94 aa)). Polar residues predominate over residues 386-402 (TQSSLINSRDQPGTSAV). A Phosphothreonine modification is found at Thr447. Arg455 carries the omega-N-methylarginine modification. A disordered region spans residues 565-592 (MSGLEGPLTKKPWLGKQGNNNQNKPGFL). Over residues 579-588 (GKQGNNNQNK) the composition is skewed to low complexity. One can recognise an RRM domain in the interval 600-674 (TKLEVKKIPQ…RFIRVLWHRE (75 aa)). The stretch at 809-886 (VQEVLKKKQE…KDELKTSSAV (78 aa)) forms a coiled coil. Position 927 is a phosphoserine (Ser927). 2 disordered regions span residues 940-968 (PVGR…SLNH) and 1006-1060 (DRRL…SWRR). Residues Ser1012 and Ser1020 each carry the phosphoserine modification. Over residues 1024 to 1053 (ETEEEEVKEEETETSDLFLPDDDDEDEDEY) the composition is skewed to acidic residues.

The protein resides in the cytoplasm. Its subcellular location is the nucleus speckle. May be involved in the turnover of nuclear polyadenylated (pA+) RNA. In Homo sapiens (Human), this protein is RNA-binding protein 27.